The primary structure comprises 23 residues: Potassium channel toxin kappa-KTx 1.2 (23 aa).

Cystine bridges form between Cys-4–Cys-22 and Cys-8–Cys-18. Cysteine amide is present on Cys-22.

Belongs to the short scorpion toxin superfamily. Potassium channel inhibitor kappa-KTx family. Kappa-KTx 1 subfamily. In terms of processing, the two disulfide isomers globular (C1-C3, C2-C4) and beads (C1-C2, C3-C4) do not show activity on Kv10.1/KCNH1/EAG1. In terms of tissue distribution, expressed by the venom gland.

It is found in the secreted. In terms of biological role, shows weak blocking activity on voltage-gated potassium channels Kv10.1/KCNH1/EAG1 (IC(50)=26 uM), Kv1.2/KCNA2 (Kd=150 uM), Kv1.3/KCNA3 (Kd=40 uM), Kv1.6/KCNA3 (16.6% inhibition at 40 uM toxin). The block is dose-dependent, voltage-independent, and reversible. Also shows a weak inhibitory activity on the plant pathogen F.culmorum growth (IC(50)=18.8-37.7 uM). In Chersonesometrus fulvipes (Indian black scorpion), this protein is Potassium channel toxin kappa-KTx 1.2.